Reading from the N-terminus, the 606-residue chain is Lysosomal cobalamin transporter ABCD4 (606 aa).

Positions 39-332 (NALMFLTLLC…CFTQLIDLST (294 aa)) constitute an ABC transmembrane type-1 domain. 5 helical membrane-spanning segments follow: residues 43–63 (FLTL…VGLI), 76–96 (LEGF…NSTL), 190–210 (IFGY…PIVM), 279–299 (YLGS…GVYG), and 314–334 (AFVC…STTL). Positions 389 to 603 (LERVSISAPS…GGGRWELMRI (215 aa)) constitute an ABC transporter domain. 421 to 428 (GNTGTGKT) lines the ATP pocket.

This sequence belongs to the ABC transporter superfamily. ABCD family. Peroxisomal fatty acyl CoA transporter (TC 3.A.1.203) subfamily. In terms of assembly, homodimer or heterodimer. Interacts with LMBRD1; this interaction induces the translocation of ABCD4 from the ER to the lysosome membrane. Interacts with LMBRD1 and MMACHC; this interaction ensures the transport of cobalamin from the lysosome to the cytosol. As to expression, ubiquitous.

The protein resides in the endoplasmic reticulum membrane. The protein localises to the lysosome membrane. It catalyses the reaction an R-cob(III)alamin(out) + ATP + H2O = an R-cob(III)alamin(in) + ADP + phosphate + H(+). In terms of biological role, lysosomal membrane protein that transports cobalamin (Vitamin B12) from the lysosomal lumen to the cytosol in an ATP-dependent manner. Targeted by LMBRD1 lysosomal chaperone from the endoplasmic reticulum to the lysosomal membrane. Then forms a complex with lysosomal chaperone LMBRD1 and cytosolic MMACHC to transport cobalamin across the lysosomal membrane. This Homo sapiens (Human) protein is Lysosomal cobalamin transporter ABCD4.